The chain runs to 160 residues: Urease accessory protein UreE (160 aa).

This sequence belongs to the UreE family.

It localises to the cytoplasm. In terms of biological role, involved in urease metallocenter assembly. Binds nickel. Probably functions as a nickel donor during metallocenter assembly. The chain is Urease accessory protein UreE from Acinetobacter baumannii (strain AB307-0294).